Reading from the N-terminus, the 255-residue chain is Small ribosomal subunit protein uS2 (255 aa).

A disordered region spans residues 233-255 (DFVAEEAASEESLEELAEIVEGK).

It belongs to the universal ribosomal protein uS2 family.

The polypeptide is Small ribosomal subunit protein uS2 (rpsB) (Lactococcus lactis subsp. lactis (strain IL1403) (Streptococcus lactis)).